The chain runs to 382 residues: Caspase-1-B (382 aa).

Residues 1–98 (MTAQLNKVRK…HEHAPSPIQE (98 aa)) constitute a propeptide that is removed on maturation. Residues His216 and Cys270 contribute to the active site. A propeptide spanning residues 283–292 (DVAPAPLEDD) is cleaved from the precursor.

The protein belongs to the peptidase C14A family. In terms of assembly, heterotetramer that consists of two anti-parallel arranged heterodimers, each one formed by a 20 kDa (Caspase-1 subunit p20) and a 10 kDa (Caspase-1 subunit p10) subunit. As to quaternary structure, heterotetramer that consists of two anti-parallel arranged heterodimers, each one formed by a 20 kDa (Caspase-1 subunit p20) and a 10 kDa (Caspase-1 subunit p10) subunit. Can form a heterodimer with isoform epsilon which then has an inhibitory effect. In terms of processing, the two subunits are derived from the precursor sequence by an autocatalytic mechanism.

It is found in the cytoplasm. It localises to the cell membrane. It catalyses the reaction Strict requirement for an Asp residue at position P1 and has a preferred cleavage sequence of Tyr-Val-Ala-Asp-|-.. In terms of biological role, thiol protease involved in a variety of inflammatory processes by proteolytically cleaving other proteins, such as the precursors of the inflammatory cytokines interleukin-1 beta (IL1B) and interleukin 18 (IL18) as well as the pyroptosis inducer Gasdermin-D (GSDMD), into active mature peptides. Plays a key role in cell immunity as an inflammatory response initiator: once activated through formation of an inflammasome complex, it initiates a pro-inflammatory response through the cleavage of the two inflammatory cytokines IL1B and IL18, releasing the mature cytokines which are involved in a variety of inflammatory processes. Cleaves a tetrapeptide after an Asp residue at position P1. Also initiates pyroptosis, a programmed lytic cell death pathway, through cleavage of GSDMD. This Xenopus laevis (African clawed frog) protein is Caspase-1-B (casp1-b).